The sequence spans 215 residues: High mobility group protein B1 (215 aa).

The HMG box 1 DNA-binding region spans 9–79 (PRGKMSSYAF…RYEKEMKNYV (71 aa)). Cysteine sulfonic acid (-SO3H); alternate is present on Cys-23. Residues Cys-23 and Cys-45 are joined by a disulfide bond. The interval 27–43 (HKKKHPDASVNFSEFSK) is NLS 1. Positions 27–43 (HKKKHPDASVNFSEFSK) match the Nuclear localization signal (NLS) 1 motif. Cys-45 bears the Cysteine sulfonic acid (-SO3H); alternate mark. The interval 75-95 (MKNYVPPKGETKKKFKDPNAP) is disordered. The segment covering 83-94 (GETKKKFKDPNA) has biased composition (basic and acidic residues). Positions 95–163 (PKRPPSAFFL…KYEKDIAAYR (69 aa)) form a DNA-binding region, HMG box 2. Cys-106 carries the cysteine sulfonic acid (-SO3H) modification. Over residues 166-179 (GKVDAGKKVVAKAE) the composition is skewed to basic and acidic residues. The tract at residues 166 to 215 (GKVDAGKKVVAKAEKSKKKKEEEEDEDEDEEDEEDEEEEEEEEEDDDDDE) is disordered. The interval 178-184 (AEKSKKK) is NLS 2. A Nuclear localization signal (NLS) 2 motif is present at residues 178-184 (AEKSKKK). Acidic residues predominate over residues 187–215 (EEEDEDEDEEDEEDEEEEEEEEEDDDDDE). Positions 196 to 210 (EDEEDEEEEEEEEED) are involved in intramolecular interaction with K-3. The tract at residues 211–215 (DDDDE) is involved in interaction with histone H3.

It belongs to the HMGB family. Post-translationally, reduction/oxidation of cysteine residues Cys-23, Cys-45 and Cys-106 and a possible intramolecular disulfide bond involving Cys-23 and Cys-45 give rise to different redox forms with specific functional activities: 1- fully reduced HMGB1 (HMGB1C23hC45hC106h), 2- disulfide HMGB1 (HMGB1C23-C45C106h) and 3- sulfonyl HMGB1 (HMGB1C23soC45soC106so).

It localises to the nucleus. The protein localises to the chromosome. Its subcellular location is the cytoplasm. It is found in the secreted. Functionally, multifunctional redox sensitive protein with various roles in different cellular compartments. Nuclear functions are attributed to fully reduced HGMB1. Associates with chromatin and binds DNA with a preference to non-canonical DNA structures such as single-stranded DNA, DNA-containing cruciforms or bent structures, supercoiled DNA and ZDNA. Can bent DNA and enhance DNA flexibility by looping thus providing a mechanism to promote activities on various gene promoters. Can restructure the canonical nucleosome. Proposed to be an universal biosensor for nucleic acids. May promote inflammatory response to sterile and infectious signals and may be involved in the coordination and integration of innate and adaptive immune responses. In the cytoplasm may function as sensor and/or chaperone for immunogenic nucleic acids, and mediate autophagy. May act as danger associated molecular pattern (DAMP) molecule that amplifies immune responses during tissue injury. The sequence is that of High mobility group protein B1 (HMGB1) from Gallus gallus (Chicken).